The following is a 792-amino-acid chain: Ubiquitin carboxyl-terminal hydrolase 10 (792 aa).

N-acetylalanine is present on A2. An interaction with p53/TP53 region spans residues 2 to 99 (ALHNPQYIFG…ILGCTTSKKI (98 aa)). The G3BP1-binding stretch occupies residues 6-21 (PQYIFGDFSPDEFNQF). T24 carries the phosphothreonine modification. The segment at 126 to 164 (SNAEAETLENDSGAGGLGQRERKKKKKRPPGYYSYLKDG) is disordered. Residues S208 and S223 each carry the phosphoserine modification. Positions 300 to 309 (DEGADLDPAK) are enriched in basic and acidic residues. Positions 300 to 323 (DEGADLDPAKPESQSPPAESALSA) are disordered. The residue at position 314 (S314) is a Phosphoserine. S330 bears the Phosphoserine; by ATM mark. Positions 350 to 369 (PMAYVETKCSPPVPSPLASE) are disordered. Phosphoserine is present on residues S359 and S364. A USP domain is found at 409 to 789 (RGLINKGNWC…TAYLLYYRRV (381 aa)). C418 acts as the Nucleophile in catalysis. S541 is subject to Phosphoserine. The disordered stretch occupies residues 542 to 580 (PTHEKHSVSNGPRSDLIEDEELEDTGKGSEDEWEQVGPK). A Phosphothreonine modification is found at T566. Position 570 is a phosphoserine (S570). The active-site Proton acceptor is the H743.

This sequence belongs to the peptidase C19 family. USP10 subfamily. As to quaternary structure, found in a deubiquitination complex with TANK, USP10 and ZC3H12A; this complex inhibits genotoxic stress- or interleukin-1-beta (IL1B)-mediated NF-kappa-B activation by promoting IKBKG or TRAF6 deubiquitination. Interacts with IKBKG; this interaction increases in response to DNA damage. Interacts with TANK; this interaction increases in response to DNA damage. Interacts with TRAF6; this interaction increases in response to DNA damage. Interacts with ZC3H12A; this interaction increases in response to DNA damage. Interacts with G3BP1 (via NTF2 domain) and G3BP2 (via NTF2 domain); inhibiting stress granule formation. Phosphorylated by ATM following DNA damage, leading to stabilization and translocation it to the nucleus. Post-translationally, ubiquitinated. Deubiquitinated by USP13.

The protein localises to the cytoplasm. The protein resides in the nucleus. It localises to the early endosome. The catalysed reaction is Thiol-dependent hydrolysis of ester, thioester, amide, peptide and isopeptide bonds formed by the C-terminal Gly of ubiquitin (a 76-residue protein attached to proteins as an intracellular targeting signal).. Specifically inhibited by spautin-1 (specific and potent autophagy inhibitor-1), a derivative of MBCQ that binds to USP10 and inhibits deubiquitinase activity. Regulated by PIK3C3/VPS34-containing complexes. Hydrolase that can remove conjugated ubiquitin from target proteins such as p53/TP53, RPS2/us5, RPS3/us3, RPS10/eS10, BECN1, SNX3 and CFTR. Acts as an essential regulator of p53/TP53 stability: in unstressed cells, specifically deubiquitinates p53/TP53 in the cytoplasm, leading to counteract MDM2 action and stabilize p53/TP53. Following DNA damage, translocates to the nucleus and deubiquitinates p53/TP53, leading to regulate the p53/TP53-dependent DNA damage response. Component of a regulatory loop that controls autophagy and p53/TP53 levels: mediates deubiquitination of BECN1, a key regulator of autophagy, leading to stabilize the PIK3C3/VPS34-containing complexes. In turn, PIK3C3/VPS34-containing complexes regulate USP10 stability, suggesting the existence of a regulatory system by which PIK3C3/VPS34-containing complexes regulate p53/TP53 protein levels via USP10 and USP13. Does not deubiquitinate MDM2. Plays a key role in 40S ribosome subunit recycling when a ribosome has stalled during translation: acts both by inhibiting formation of stress granules, which store stalled translation pre-initiation complexes, and mediating deubiquitination of 40S ribosome subunits. Acts as a negative regulator of stress granules formation by lowering G3BP1 and G3BP2 valence, thereby preventing G3BP1 and G3BP2 ability to undergo liquid-liquid phase separation (LLPS) and assembly of stress granules. Promotes 40S ribosome subunit recycling following ribosome dissociation in response to ribosome stalling by mediating deubiquitination of 40S ribosomal proteins RPS2/us5, RPS3/us3 and RPS10/eS10, thereby preventing their degradation by the proteasome. Part of a ribosome quality control that takes place when ribosomes have stalled during translation initiation (iRQC): USP10 acts by removing monoubiquitination of RPS2/us5 and RPS3/us3, promoting 40S ribosomal subunit recycling. Deubiquitinates CFTR in early endosomes, enhancing its endocytic recycling. Involved in a TANK-dependent negative feedback response to attenuate NF-kappa-B activation via deubiquitinating IKBKG or TRAF6 in response to interleukin-1-beta (IL1B) stimulation or upon DNA damage. Deubiquitinates TBX21 leading to its stabilization. Plays a negative role in the RLR signaling pathway upon RNA virus infection by blocking the RIGI-mediated MAVS activation. Mechanistically, removes the unanchored 'Lys-63'-linked polyubiquitin chains of MAVS to inhibit its aggregation, essential for its activation. This chain is Ubiquitin carboxyl-terminal hydrolase 10 (Usp10), found in Mus musculus (Mouse).